The following is a 736-amino-acid chain: ATP-dependent zinc metalloprotease FtsH (736 aa).

Disordered stretches follow at residues 1-39 and 57-83; these read MDSN…GQQR and QQTQ…RKKM. Residues 1-87 lie on the Cytoplasmic side of the membrane; the sequence is MDSNVDSQRV…ADRKKMPPGK (87 aa). Polar residues predominate over residues 57-73; that stretch reads QQTQNRTGFASADTKQG. A helical membrane pass occupies residues 88–108; it reads AWLWFVLILIVNFLMVRLLIP. Residues 109–205 lie on the Periplasmic side of the membrane; sequence DAEQPVMVPY…KPIHEERSPW (97 aa). The helical transmembrane segment at 206–226 threads the bilayer; that stretch reads ATIVYSFGPGLLFIAFYIWLF. Over 227–736 the chain is Cytoplasmic; that stretch reads RRMAQQGGLG…VSLPGVAGPS (510 aa). 301-308 is a binding site for ATP; it reads GAPGTGKT. Histidine 522 provides a ligand contact to Zn(2+). Residue glutamate 523 is part of the active site. Residues histidine 526 and aspartate 598 each coordinate Zn(2+). The disordered stretch occupies residues 706–736; the sequence is PALDAGKLPVPDGGDKNAEPSVSLPGVAGPS.

The protein in the central section; belongs to the AAA ATPase family. This sequence in the C-terminal section; belongs to the peptidase M41 family. In terms of assembly, homohexamer. The cofactor is Zn(2+).

The protein localises to the cell inner membrane. In terms of biological role, acts as a processive, ATP-dependent zinc metallopeptidase for both cytoplasmic and membrane proteins. Plays a role in the quality control of integral membrane proteins. This chain is ATP-dependent zinc metalloprotease FtsH, found in Syntrophus aciditrophicus (strain SB).